Consider the following 493-residue polypeptide: Vacuolar-processing enzyme (493 aa).

An N-terminal signal peptide occupies residues Met-1–Leu-19. The N-linked (GlcNAc...) asparagine glycan is linked to Asn-147. Residue His-174 is part of the active site. The active-site Nucleophile is Cys-216. An intrachain disulfide couples Cys-249 to Cys-263. Residues Asn-295 and Asn-331 are each glycosylated (N-linked (GlcNAc...) asparagine). 2 disulfides stabilise this stretch: Cys-429-Cys-459 and Cys-441-Cys-476.

The protein belongs to the peptidase C13 family.

Its function is as follows. Asparagine-specific endopeptidase involved in the processing of vacuolar seed protein precursors into the mature forms. The protein is Vacuolar-processing enzyme of Vicia sativa (Spring vetch).